Here is a 194-residue protein sequence, read N- to C-terminus: Imidazoleglycerol-phosphate dehydratase (194 aa).

Belongs to the imidazoleglycerol-phosphate dehydratase family.

It localises to the cytoplasm. The catalysed reaction is D-erythro-1-(imidazol-4-yl)glycerol 3-phosphate = 3-(imidazol-4-yl)-2-oxopropyl phosphate + H2O. The protein operates within amino-acid biosynthesis; L-histidine biosynthesis; L-histidine from 5-phospho-alpha-D-ribose 1-diphosphate: step 6/9. This Thermoanaerobacter sp. (strain X514) protein is Imidazoleglycerol-phosphate dehydratase.